The following is an 898-amino-acid chain: Probable LRR receptor-like serine/threonine-protein kinase At4g20450 (898 aa).

An N-terminal signal peptide occupies residues 1 to 24 (MEGIHKLIFLALIWIFLITNIVDA). The Extracellular segment spans residues 25–535 (QDQQGFISLD…TGPGNNKKKL (511 aa)). Residues Asn-40, Asn-52, Asn-98, Asn-247, Asn-253, Asn-420, Asn-443, Asn-465, Asn-484, and Asn-489 are each glycosylated (N-linked (GlcNAc...) asparagine). LRR repeat units lie at residues 455 to 477 (QLQK…LAKM), 479 to 501 (LLTF…LLNM), and 505 to 526 (GLIT…ESET). Residues 536–556 (LVPILASAASVGIIIAVLLLV) traverse the membrane as a helical segment. Topologically, residues 557 to 898 (NILLLRKKKP…FGPEHIPDAR (342 aa)) are cytoplasmic. Residue Thr-582 is modified to Phosphothreonine. The Protein kinase domain maps to 591–864 (NNFERPLGEG…QVANELQECL (274 aa)). ATP is bound by residues 597–605 (LGEGGFGVV) and Lys-619. Tyr-664 carries the post-translational modification Phosphotyrosine. Asp-716 functions as the Proton acceptor in the catalytic mechanism. Ser-750 is modified (phosphoserine). Phosphothreonine is present on Thr-751. Tyr-764 is subject to Phosphotyrosine. Residues 864 to 898 (LLTENSRKGGRHDVDSKSSLEQSTSFGPEHIPDAR) are disordered. Basic and acidic residues predominate over residues 868–881 (NSRKGGRHDVDSKS).

It belongs to the protein kinase superfamily. Ser/Thr protein kinase family.

It localises to the membrane. It catalyses the reaction L-seryl-[protein] + ATP = O-phospho-L-seryl-[protein] + ADP + H(+). It carries out the reaction L-threonyl-[protein] + ATP = O-phospho-L-threonyl-[protein] + ADP + H(+). This Arabidopsis thaliana (Mouse-ear cress) protein is Probable LRR receptor-like serine/threonine-protein kinase At4g20450.